The chain runs to 441 residues: Myocyte-specific enhancer factor 2C (441 aa).

The MADS-box domain maps to 1 to 61; the sequence is MGRKKIQITR…NKLFQYASTD (61 aa). Lys-4 carries the post-translational modification N6-acetyllysine. The mef2-type DNA-binding region spans 58-86; that stretch reads ASTDMDKVLLKYTEYNEPHESRTNSDIVE. Ser-59 carries the post-translational modification Phosphoserine; by CK2. The segment at 91–116 is disordered; the sequence is KGLNGCDSPDPDADDSVGHSPESEDK. A phosphoserine mark is found at Ser-98, Ser-106, and Ser-110. Residues Lys-116 and Lys-119 each carry the N6-acetyllysine modification. Positions 180 to 224 are disordered; the sequence is NSMSPGVTHRPPSAGNTGGLMGGDLTSGAGTSAGNGYGNPRNSPG. A phosphoserine mark is found at Ser-222 and Ser-228. Residues Lys-234 and Lys-239 each carry the N6-acetyllysine modification. A Phosphoserine modification is found at Ser-240. N6-acetyllysine occurs at positions 252 and 264. A beta domain region spans residues 271-278; the sequence is SEDVDLLL. Residues Thr-293 and Thr-300 each carry the phosphothreonine; by MAPK7 and MAPK14 modification. A disordered region spans residues 353–441; it reads QHLHSMPPSA…RMRLSEGWAT (89 aa). Residues 362–377 show a composition bias toward polar residues; that stretch reads ALSQLGDRTTTPSRYP. The residue at position 387 (Ser-387) is a Phosphoserine; by MAPK7. The span at 387–400 shows a compositional bias: low complexity; it reads SPVDSLSSCSSSYD. Positions 401-411 are enriched in basic and acidic residues; that stretch reads GSDREDHRNEF. Position 413 is a phosphoserine (Ser-413).

Belongs to the MEF2 family. Forms a complex with class II HDACs in undifferentiating cells. On myogenic differentiation, HDACs are released into the cytoplasm allowing MEF2s to interact with other proteins for activation. Interacts with EP300 in differentiating cells; the interaction acetylates MEF2C leading to increased DNA binding and activation. Interacts with HDAC7 and CARM1. Interacts with HDAC4, HDAC7 and HDAC9; the interaction with HDACs represses transcriptional activity. Interacts with LPIN1. Interacts with MYOCD. Interacts with AKAP13. Interacts with FOXK1; the interaction inhibits MEF2C transactivation activity. Interacts (via N-terminus) with HABP4; this interaction decreases DNA-binding activity of MEF2C in myocardial cells in response to mechanical stress. Interacts with JPH2; interaction specifically takes place with the Junctophilin-2 N-terminal fragment cleavage product of JPH2. Interacts (via MADS box) with SOX18. Interacts with PHF7; the interaction promotes MEF2C binding to its transcription targets. In terms of processing, phosphorylation on Ser-59 enhances DNA binding activity. Post-translationally, acetylated by p300 on several sites in diffentiating myocytes. Acetylation on Lys-4 increases DNA binding and transactivation. Proteolytically cleaved in cerebellar granule neurons, probably by caspase 7, following neurotoxicity.

The protein resides in the nucleus. Its subcellular location is the cytoplasm. It localises to the sarcoplasm. Its function is as follows. Transcription activator which binds specifically to the MEF2 element present in the regulatory regions of many muscle-specific genes. Controls cardiac morphogenesis and myogenesis, and is also involved in vascular development. Enhances transcriptional activation mediated by SOX18. Plays an essential role in hippocampal-dependent learning and memory by suppressing the number of excitatory synapses and thus regulating basal and evoked synaptic transmission. Crucial for normal neuronal development, distribution, and electrical activity in the neocortex. Necessary for proper development of megakaryocytes and platelets and for bone marrow B-lymphopoiesis. Required for B-cell survival and proliferation in response to BCR stimulation, efficient IgG1 antibody responses to T-cell-dependent antigens and for normal induction of germinal center B-cells. May also be involved in neurogenesis and in the development of cortical architecture. The protein is Myocyte-specific enhancer factor 2C of Bos taurus (Bovine).